Consider the following 170-residue polypeptide: Heat shock protein beta-7 (170 aa).

The segment at 1 to 39 is disordered; the sequence is MSHRTSSTFRAERSFHSSSSSSSSSTSSSASRALPAQDP. Residues 1–71 are required for localization to SC35 splicing speckles; that stretch reads MSHRTSSTFR…PLAFPARPGG (71 aa). The segment covering 16–31 has biased composition (low complexity); sequence HSSSSSSSSSTSSSAS. Residues 62–170 form the sHSP domain; that stretch reads PLAFPARPGG…QQTFRTEIKI (109 aa).

Belongs to the small heat shock protein (HSP20) family. Interacts with C-terminal domain of actin-binding protein 280. In terms of tissue distribution, isoform 1 is highly expressed in adult and fetal heart, skeletal muscle, and at a much lower levels in adipose tissue and in aorta. Undetectable in other tissues. Isoform 2 and isoform 3 are poorly detected in heart.

Its subcellular location is the cytoplasm. The protein localises to the nucleus. It localises to the cajal body. In Homo sapiens (Human), this protein is Heat shock protein beta-7 (HSPB7).